Consider the following 406-residue polypeptide: N-acetylmuramoyl-L-alanine amidase CwlM (406 aa).

2 peptidoglycan-binding domain regions span residues 18–83 (SAAV…YRAL) and 105–160 (GDDV…LRSL). The region spanning 193–370 (IIIDPGRGGV…IAEGILAAVK (178 aa)) is the MurNAc-LAA domain.

The protein belongs to the N-acetylmuramoyl-L-alanine amidase 3 family.

The protein localises to the periplasm. It carries out the reaction Hydrolyzes the link between N-acetylmuramoyl residues and L-amino acid residues in certain cell-wall glycopeptides.. It functions in the pathway cell wall degradation; peptidoglycan degradation. Its function is as follows. Cell-wall hydrolase that hydrolyzes the amide bond between N-acetylmuramic acid and L-alanine in cell-wall glycopeptides. Is able to lyse whole mycobacteria, release peptidoglycan from the cell wall of M.luteus and M.smegmatis, and cleave N-acetylmuramoyl-L-alanyl-D-isoglutamine, releasing free N-acetylmuramic acid and dipeptide. The chain is N-acetylmuramoyl-L-alanine amidase CwlM from Mycobacterium tuberculosis (strain ATCC 25618 / H37Rv).